Reading from the N-terminus, the 238-residue chain is MRLDQRALDQLRDVKITRNYTRYAEGSVLVEFGHTKVLCTASIDNSVPRFLKGQGQGWVTAEYGMLPRSTHTRSDREAARGKQTGRTQEIQRLIGRSLRAMVDLKKLGENTITIDCDVIQADGGTRTAAITGAAVALIDAMNVLLEKKKIKQDPLKGLVAAISVGIYQDEVLLDLCYEEDSNCQTDLNVVMTQAGEFIEIQGTAEEKPFTRTQANAMLEVAEKGIQELIKKQQQALGW.

Residues arginine 86 and 124–126 (GTR) contribute to the phosphate site.

This sequence belongs to the RNase PH family. In terms of assembly, homohexameric ring arranged as a trimer of dimers.

The enzyme catalyses tRNA(n+1) + phosphate = tRNA(n) + a ribonucleoside 5'-diphosphate. Phosphorolytic 3'-5' exoribonuclease that plays an important role in tRNA 3'-end maturation. Removes nucleotide residues following the 3'-CCA terminus of tRNAs; can also add nucleotides to the ends of RNA molecules by using nucleoside diphosphates as substrates, but this may not be physiologically important. Probably plays a role in initiation of 16S rRNA degradation (leading to ribosome degradation) during starvation. This chain is Ribonuclease PH, found in Acinetobacter baylyi (strain ATCC 33305 / BD413 / ADP1).